A 474-amino-acid chain; its full sequence is ATP synthase subunit beta (474 aa).

153-160 (GGAGVGKT) is a binding site for ATP.

It belongs to the ATPase alpha/beta chains family. As to quaternary structure, F-type ATPases have 2 components, CF(1) - the catalytic core - and CF(0) - the membrane proton channel. CF(1) has five subunits: alpha(3), beta(3), gamma(1), delta(1), epsilon(1). CF(0) has three main subunits: a(1), b(2) and c(9-12). The alpha and beta chains form an alternating ring which encloses part of the gamma chain. CF(1) is attached to CF(0) by a central stalk formed by the gamma and epsilon chains, while a peripheral stalk is formed by the delta and b chains.

It is found in the cell inner membrane. It catalyses the reaction ATP + H2O + 4 H(+)(in) = ADP + phosphate + 5 H(+)(out). Its function is as follows. Produces ATP from ADP in the presence of a proton gradient across the membrane. The catalytic sites are hosted primarily by the beta subunits. This Rickettsia prowazekii (strain Madrid E) protein is ATP synthase subunit beta.